A 136-amino-acid chain; its full sequence is Large ribosomal subunit protein bL21 (136 aa).

A compositionally biased stretch (low complexity) spans 1 to 21 (MSETPSKAKASKPAESKAQAS). Residues 1–25 (MSETPSKAKASKPAESKAQASDSSG) form a disordered region.

This sequence belongs to the bacterial ribosomal protein bL21 family. As to quaternary structure, part of the 50S ribosomal subunit. Contacts protein L20.

Its function is as follows. This protein binds to 23S rRNA in the presence of protein L20. In Synechococcus sp. (strain RCC307), this protein is Large ribosomal subunit protein bL21.